Reading from the N-terminus, the 409-residue chain is Argininosuccinate synthase (409 aa).

ATP contacts are provided by residues 13–21 (AYSGGLDTS) and Ala40. 2 residues coordinate L-citrulline: Tyr91 and Ser96. Gly121 contributes to the ATP binding site. L-aspartate is bound by residues Thr123, Asn127, and Asp128. Asn127 is an L-citrulline binding site. Residues Arg131, Ser183, Ser192, Glu268, and Tyr280 each coordinate L-citrulline.

Belongs to the argininosuccinate synthase family. Type 1 subfamily. As to quaternary structure, homotetramer.

The protein localises to the cytoplasm. It carries out the reaction L-citrulline + L-aspartate + ATP = 2-(N(omega)-L-arginino)succinate + AMP + diphosphate + H(+). The protein operates within amino-acid biosynthesis; L-arginine biosynthesis; L-arginine from L-ornithine and carbamoyl phosphate: step 2/3. The chain is Argininosuccinate synthase from Saccharophagus degradans (strain 2-40 / ATCC 43961 / DSM 17024).